Reading from the N-terminus, the 79-residue chain is MSKVSGGSRRTRARRPMSNRRGRRSQSAAHRSRAQRRRRRTGTTRRARTSTARRARTRTARRSDLTRMMARDYGSDYRS.

Positions 1–79 (MSKVSGGSRR…ARDYGSDYRS (79 aa)) are disordered. Positions 9–60 (RRTRARRPMSNRRGRRSQSAAHRSRAQRRRRRTGTTRRARTSTARRARTRTA) are enriched in basic residues. 2 repeats span residues 45 to 52 (RRARTSTA) and 53 to 60 (RRARTRTA). Residues 61 to 79 (RRSDLTRMMARDYGSDYRS) are compositionally biased toward basic and acidic residues.

It localises to the nucleus. The protein is Sperm-specific basic nuclear protein SP4 (sp4-a) of Xenopus laevis (African clawed frog).